The sequence spans 408 residues: Neutral cholesterol ester hydrolase 1 (408 aa).

Topologically, residues 1–4 (MRSS) are cytoplasmic. The helical; Signal-anchor for type II membrane protein transmembrane segment at 5–25 (CVLLAALLALVAYYVYIPLPS) threads the bilayer. The Lumenal segment spans residues 26–408 (AVSDPWKLML…SYFKWLDQNL (383 aa)). The Involved in the stabilization of the negatively charged intermediate by the formation of the oxyanion hole motif lies at 113-115 (HGG). The active site involves serine 191. A glycan (N-linked (GlcNAc...) asparagine) is linked at asparagine 270. Residue aspartate 348 is part of the active site. A glycan (N-linked (GlcNAc...) asparagine) is linked at asparagine 367. Histidine 378 is a catalytic residue. N-linked (GlcNAc...) asparagine glycosylation is present at asparagine 389.

The protein belongs to the 'GDXG' lipolytic enzyme family. In terms of processing, N-glycosylated.

It is found in the cell membrane. The protein resides in the microsome. The enzyme catalyses a 1-O-alkyl-2-acetyl-sn-glycerol + H2O = a 1-O-alkyl-sn-glycerol + acetate + H(+). It carries out the reaction 1-O-hexadecyl-2-acetyl-sn-glycerol + H2O = 1-O-hexadecyl-sn-glycerol + acetate + H(+). It catalyses the reaction a cholesterol ester + H2O = cholesterol + a fatty acid + H(+). The catalysed reaction is cholesteryl (9Z-octadecenoate) + H2O = cholesterol + (9Z)-octadecenoate + H(+). Its function is as follows. Hydrolyzes 2-acetyl monoalkylglycerol ether (1-O-alkyl-2-acetyl-sn-glycerol), the penultimate precursor of the pathway for de novo synthesis of platelet-activating factor. May be responsible for the hydrolysis of cholesterol esters (such as cholesteryl (9Z-octadecenoate)) in macrophages. Also involved in organ detoxification by hydrolyzing exogenous organophosphorus compounds. In Rattus norvegicus (Rat), this protein is Neutral cholesterol ester hydrolase 1 (Nceh1).